Reading from the N-terminus, the 115-residue chain is NADH-ubiquinone oxidoreductase chain 3 (115 aa).

3 consecutive transmembrane segments (helical) span residues 4–24 (ILTL…AFWL), 55–75 (FFLV…LLPL), and 84–104 (SYLT…GLAY).

Belongs to the complex I subunit 3 family. As to quaternary structure, core subunit of respiratory chain NADH dehydrogenase (Complex I) which is composed of 45 different subunits. Interacts with TMEM186. Interacts with TMEM242.

The protein resides in the mitochondrion inner membrane. It carries out the reaction a ubiquinone + NADH + 5 H(+)(in) = a ubiquinol + NAD(+) + 4 H(+)(out). Functionally, core subunit of the mitochondrial membrane respiratory chain NADH dehydrogenase (Complex I) which catalyzes electron transfer from NADH through the respiratory chain, using ubiquinone as an electron acceptor. Essential for the catalytic activity of complex I. The polypeptide is NADH-ubiquinone oxidoreductase chain 3 (Necromys lactens (Rufous-bellied bolo mouse)).